The following is a 349-amino-acid chain: UDP-3-O-acylglucosamine N-acyltransferase (349 aa).

The active-site Proton acceptor is the His-248.

This sequence belongs to the transferase hexapeptide repeat family. LpxD subfamily. In terms of assembly, homotrimer.

The catalysed reaction is a UDP-3-O-[(3R)-3-hydroxyacyl]-alpha-D-glucosamine + a (3R)-hydroxyacyl-[ACP] = a UDP-2-N,3-O-bis[(3R)-3-hydroxyacyl]-alpha-D-glucosamine + holo-[ACP] + H(+). The protein operates within bacterial outer membrane biogenesis; LPS lipid A biosynthesis. In terms of biological role, catalyzes the N-acylation of UDP-3-O-acylglucosamine using 3-hydroxyacyl-ACP as the acyl donor. Is involved in the biosynthesis of lipid A, a phosphorylated glycolipid that anchors the lipopolysaccharide to the outer membrane of the cell. In Gloeothece citriformis (strain PCC 7424) (Cyanothece sp. (strain PCC 7424)), this protein is UDP-3-O-acylglucosamine N-acyltransferase.